The following is a 175-amino-acid chain: Bifunctional protein PyrR (175 aa).

The short motif at 98-110 (VIIIDDVLYTGRT) is the PRPP-binding element.

The protein belongs to the purine/pyrimidine phosphoribosyltransferase family. PyrR subfamily. In terms of assembly, homodimer and homohexamer; in equilibrium.

It carries out the reaction UMP + diphosphate = 5-phospho-alpha-D-ribose 1-diphosphate + uracil. Its function is as follows. Regulates transcriptional attenuation of the pyrimidine nucleotide (pyr) operon by binding in a uridine-dependent manner to specific sites on pyr mRNA. This disrupts an antiterminator hairpin in the RNA and favors formation of a downstream transcription terminator, leading to a reduced expression of downstream genes. Also displays a weak uracil phosphoribosyltransferase activity which is not physiologically significant. The polypeptide is Bifunctional protein PyrR (Staphylococcus carnosus (strain TM300)).